A 392-amino-acid chain; its full sequence is tRNA (guanine-N(7)-)-methyltransferase (392 aa).

S-adenosyl-L-methionine-binding residues include Glu123, Glu148, and Asp175. Residues Lys201 and Asp231 each coordinate substrate.

It belongs to the class I-like SAM-binding methyltransferase superfamily. TrmB family.

The enzyme catalyses guanosine(46) in tRNA + S-adenosyl-L-methionine = N(7)-methylguanosine(46) in tRNA + S-adenosyl-L-homocysteine. It participates in tRNA modification; N(7)-methylguanine-tRNA biosynthesis. Its function is as follows. Catalyzes the formation of N(7)-methylguanine at position 46 (m7G46) in tRNA. This Campylobacter jejuni subsp. jejuni serotype O:6 (strain 81116 / NCTC 11828) protein is tRNA (guanine-N(7)-)-methyltransferase.